Reading from the N-terminus, the 387-residue chain is MNASMPRDGALLVNAPLHIALAAGGTGGHVFPAEALAGELIRRGHKLTLITDKRGHVYGGTLGLLDTKRILAGGVAGRGVIGRLRGMIELAMGSLQAYGLLRRLRPDVVVGFGGYASVPTMLAAIRLKLPTVVHEQNAVPGRANRLLAARVSRYAVSFARAERPRGARPVVVGMPVRPSVLALRGEGYDAPRPGLDFRLLITGGSQGARVFATLVPQALALLSPAHRARLRVTQQCRPEDIEAVRATYEAQGIDALLSAFFSDLPERLRDAHLVICRSGASTVGELAALGRPAILVPFPHAIDDHQTANARGLDEVGGGWLMPQAALTPQALAERLGELMDDPDVLVRAAQCARGAGVPDAAVRLADLVSATADHRVPEMPPKEISA.

UDP-N-acetyl-alpha-D-glucosamine contacts are provided by residues T26 to G28, N137, R177, S205, and Q306.

Belongs to the glycosyltransferase 28 family. MurG subfamily.

The protein resides in the cell inner membrane. It carries out the reaction di-trans,octa-cis-undecaprenyl diphospho-N-acetyl-alpha-D-muramoyl-L-alanyl-D-glutamyl-meso-2,6-diaminopimeloyl-D-alanyl-D-alanine + UDP-N-acetyl-alpha-D-glucosamine = di-trans,octa-cis-undecaprenyl diphospho-[N-acetyl-alpha-D-glucosaminyl-(1-&gt;4)]-N-acetyl-alpha-D-muramoyl-L-alanyl-D-glutamyl-meso-2,6-diaminopimeloyl-D-alanyl-D-alanine + UDP + H(+). Its pathway is cell wall biogenesis; peptidoglycan biosynthesis. Functionally, cell wall formation. Catalyzes the transfer of a GlcNAc subunit on undecaprenyl-pyrophosphoryl-MurNAc-pentapeptide (lipid intermediate I) to form undecaprenyl-pyrophosphoryl-MurNAc-(pentapeptide)GlcNAc (lipid intermediate II). The polypeptide is UDP-N-acetylglucosamine--N-acetylmuramyl-(pentapeptide) pyrophosphoryl-undecaprenol N-acetylglucosamine transferase (Rhodospirillum rubrum (strain ATCC 11170 / ATH 1.1.1 / DSM 467 / LMG 4362 / NCIMB 8255 / S1)).